Consider the following 244-residue polypeptide: Protein IN2-1 homolog B (244 aa).

The interval 1–27 is disordered; sequence MAAAAAAPASSEKEVLPPSLTSSSEPP. Residues 32–113 form the GST N-terminal domain; it reads GTTRLYVAYH…YIDTNFEGPA (82 aa). Glutathione-binding positions include Val85 and 97–98; that span reads ES. Positions 118 to 241 constitute a GST C-terminal domain; sequence DSEKQQFAEE…FLLEHTKKRL (124 aa).

The polypeptide is Protein IN2-1 homolog B (GSTZ5) (Oryza sativa subsp. indica (Rice)).